The following is a 507-amino-acid chain: Cytochrome P450 71A4 (507 aa).

The helical transmembrane segment at 3–23 (VPCLWYSLLILLLLFIFLLIH) threads the bilayer. C448 lines the heme pocket.

Belongs to the cytochrome P450 family. Heme is required as a cofactor.

The protein resides in the membrane. Its function is as follows. May have a role in maturation, such as during flavor formation or other metabolite production specific to aging tissues. The polypeptide is Cytochrome P450 71A4 (CYP71A4) (Solanum melongena (Eggplant)).